The following is a 371-amino-acid chain: Cytochrome b (371 aa).

A run of 4 helical transmembrane segments spans residues 25–45, 69–90, 105–125, and 170–190; these read FGSM…FLAV, WMMQ…YIHI, WLSG…XXXX, and XXXX…LHIM. Residues H75 and H89 each coordinate heme b. Residues X174 and H188 each coordinate heme b. A ubiquinone is bound at residue H193. The next 4 helical transmembrane spans lie at 218-238, 280-300, 312-332, and 339-358; these read YKDL…VSFL, LGGA…PFTH, IMQL…WAAT, and FTMI…ITNP.

The protein belongs to the cytochrome b family. The cytochrome bc1 complex contains 3 respiratory subunits (MT-CYB, CYC1 and UQCRFS1), 2 core proteins (UQCRC1 and UQCRC2) and probably 6 low-molecular weight proteins. The cofactor is heme b.

It is found in the mitochondrion inner membrane. Component of the ubiquinol-cytochrome c reductase complex (complex III or cytochrome b-c1 complex) that is part of the mitochondrial respiratory chain. The b-c1 complex mediates electron transfer from ubiquinol to cytochrome c. Contributes to the generation of a proton gradient across the mitochondrial membrane that is then used for ATP synthesis. This is Cytochrome b (MT-CYB) from Eryx jaculus (Javelin sand boa).